The following is a 266-amino-acid chain: Ras-like protein family member 12 (266 aa).

GTP is bound by residues 27-34 (GRRGAGKS), 74-78 (DTADL), and 134-137 (NKLD).

It belongs to the small GTPase superfamily. Ras family.

It carries out the reaction GTP + H2O = GDP + phosphate + H(+). The polypeptide is Ras-like protein family member 12 (RASL12) (Homo sapiens (Human)).